The primary structure comprises 489 residues: GTPase Der (489 aa).

2 consecutive EngA-type G domains span residues 3–166 (PVIA…PKDE) and 195–368 (IKIA…KSAV). GTP contacts are provided by residues 9–16 (GRPNVGKS), 56–60 (DTGGI), 118–121 (NKID), 201–208 (GRPNVGKS), 248–252 (DTAGV), and 313–316 (NKWD). Residues 369 to 453 (TRWPTSRLTQ…PIRIEFKGGE (85 aa)) form the KH-like domain. Positions 451–489 (GGENPYEGNKNTLTDRQVNKKRRMMSHHKKADKKRRDKR) are disordered. Residues 469 to 489 (NKKRRMMSHHKKADKKRRDKR) are compositionally biased toward basic residues.

This sequence belongs to the TRAFAC class TrmE-Era-EngA-EngB-Septin-like GTPase superfamily. EngA (Der) GTPase family. Associates with the 50S ribosomal subunit.

In terms of biological role, GTPase that plays an essential role in the late steps of ribosome biogenesis. In Pseudomonas syringae pv. tomato (strain ATCC BAA-871 / DC3000), this protein is GTPase Der.